The primary structure comprises 156 residues: Endoribonuclease YbeY (156 aa).

3 residues coordinate Zn(2+): H117, H121, and H127.

Belongs to the endoribonuclease YbeY family. Requires Zn(2+) as cofactor.

The protein localises to the cytoplasm. Single strand-specific metallo-endoribonuclease involved in late-stage 70S ribosome quality control and in maturation of the 3' terminus of the 16S rRNA. In Shewanella frigidimarina (strain NCIMB 400), this protein is Endoribonuclease YbeY.